A 427-amino-acid polypeptide reads, in one-letter code: Beta-1,3-galactosyl-O-glycosyl-glycoprotein beta-1,6-N-acetylglucosaminyltransferase (427 aa).

The Cytoplasmic segment spans residues 1–9 (MLRKLWRRK). A mediates interaction with GOLPH3 and is necessary and sufficient for localization to the Golgi region spans residues 5-9 (LWRRK). The helical; Signal-anchor for type II membrane protein transmembrane segment at 10–32 (LFSFPTKYYFLFLAFSVVTFTVL) threads the bilayer. The tract at residues 33–121 (RIHQKTEFVN…EPLSKEEAGF (89 aa)) is stem region. Residues 33-427 (RIHQKTEFVN…RHKALETLKP (395 aa)) lie on the Lumenal side of the membrane. N-linked (GlcNAc...) asparagine glycans are attached at residues Asn-58 and Asn-95. Intrachain disulfides connect Cys-59–Cys-412, Cys-100–Cys-172, Cys-151–Cys-199, and Cys-372–Cys-380. Residues 122–427 (PIAYSIVVHH…RHKALETLKP (306 aa)) form a catalytic region. UDP-N-acetyl-alpha-D-glucosamine is bound by residues 128-130 (VVH), 155-157 (DAK), and Tyr-187. Residues Glu-243, Lys-251, Arg-254, Glu-320, Lys-341, and Tyr-358 each contribute to the a glycoprotein site. The active-site Nucleophile is Glu-320. Residues Arg-377 and Lys-400 each contribute to the UDP-N-acetyl-alpha-D-glucosamine site.

It belongs to the glycosyltransferase 14 family. In terms of assembly, interacts with GOLPH3; may control GCNT1 retention in the Golgi. In terms of tissue distribution, expressed in tracheal submucosal glands and epithelium (at protein level).

It localises to the golgi apparatus membrane. It carries out the reaction a 3-O-[beta-D-galactosyl-(1-&gt;3)-N-acetyl-alpha-D-galactosaminyl]-L-seryl-[protein] + UDP-N-acetyl-alpha-D-glucosamine = 3-O-{beta-D-galactosyl-(1-&gt;3)-[N-acetyl-beta-D-glucosaminyl-(1-&gt;6)]-N-acetyl-alpha-D-galactosaminyl}-L-seryl-[protein] + UDP + H(+). It catalyses the reaction a 3-O-[beta-D-galactosyl-(1-&gt;3)-N-acetyl-alpha-D-galactosaminyl]-L-threonyl-[protein] + UDP-N-acetyl-alpha-D-glucosamine = a 3-O-{beta-D-galactosyl-(1-&gt;3)-[N-acetyl-beta-D-glucosaminyl-(1-&gt;6)]-N-acetyl-alpha-D-galactosaminyl}-L-threonyl-[protein] + UDP + H(+). The enzyme catalyses a globoside GalGb4Cer + UDP-N-acetyl-alpha-D-glucosamine = a globoside GlcNAc-(beta1-&gt;6)-GalGb4Cer + UDP + H(+). The catalysed reaction is a ganglioside GA1 + UDP-N-acetyl-alpha-D-glucosamine = a ganglioside beta-D-GlcNAc-(1-&gt;6)-GA1 + UDP + H(+). The protein operates within protein modification; protein glycosylation. It functions in the pathway glycolipid biosynthesis. Functionally, glycosyltransferase that catalyzes the transfer of an N-acetylglucosamine (GlcNAc) moiety in beta1-6 linkage from UDP-GlcNAc onto mucin-type core 1 O-glycan to form the branched mucin-type core 2 O-glycan. The catalysis is metal ion-independent and occurs with inversion of the anomeric configuration of sugar donor. Selectively involved in synthesis of mucin-type core 2 O-glycans that serve as scaffolds for the display of selectin ligand sialyl Lewis X epitope by myeloid cells, with an impact on homeostasis and recruitment to inflammatory sites. Can also act on glycolipid substrates. Transfers GlcNAc moiety to GalGb4Cer globosides in a reaction step to the synthesis of stage-specific embryonic antigen 1 (SSEA-1) determinant. Can use Galbeta1-3GalNAcalpha1- and Galbeta1-3GalNAcbeta1- oligosaccharide derivatives as acceptor substrates. The chain is Beta-1,3-galactosyl-O-glycosyl-glycoprotein beta-1,6-N-acetylglucosaminyltransferase (GCNT1) from Bos taurus (Bovine).